Consider the following 306-residue polypeptide: Porphobilinogen deaminase (306 aa).

C239 carries the post-translational modification S-(dipyrrolylmethanemethyl)cysteine.

The protein belongs to the HMBS family. Monomer. Requires dipyrromethane as cofactor.

It catalyses the reaction 4 porphobilinogen + H2O = hydroxymethylbilane + 4 NH4(+). It functions in the pathway porphyrin-containing compound metabolism; protoporphyrin-IX biosynthesis; coproporphyrinogen-III from 5-aminolevulinate: step 2/4. Tetrapolymerization of the monopyrrole PBG into the hydroxymethylbilane pre-uroporphyrinogen in several discrete steps. In Helicobacter pylori (strain J99 / ATCC 700824) (Campylobacter pylori J99), this protein is Porphobilinogen deaminase (hemC).